The primary structure comprises 240 residues: Dihydromonapterin reductase (240 aa).

Y152 functions as the Proton acceptor in the catalytic mechanism.

This sequence belongs to the short-chain dehydrogenases/reductases (SDR) family. FolM subfamily.

It carries out the reaction (6S)-5,6,7,8-tetrahydrofolate + NADP(+) = 7,8-dihydrofolate + NADPH + H(+). The enzyme catalyses 7,8-dihydromonapterin + NADPH + H(+) = 5,6,7,8-tetrahydromonapterin + NADP(+). In terms of biological role, catalyzes the reduction of dihydromonapterin to tetrahydromonapterin. Also has lower activity with dihydrofolate. In Escherichia coli (strain SMS-3-5 / SECEC), this protein is Dihydromonapterin reductase (folM).